The sequence spans 100 residues: Small ribosomal subunit protein uS14 (100 aa).

Belongs to the universal ribosomal protein uS14 family. As to quaternary structure, part of the 30S ribosomal subunit. Contacts proteins S3 and S10.

Functionally, binds 16S rRNA, required for the assembly of 30S particles and may also be responsible for determining the conformation of the 16S rRNA at the A site. In Trichodesmium erythraeum (strain IMS101), this protein is Small ribosomal subunit protein uS14.